The chain runs to 3476 residues: Abnormal spindle-like microcephaly-associated protein homolog (3476 aa).

Positions Met1 to Glu30 are disordered. Residues Ser280, Ser283, Ser367, Ser392, and Ser425 each carry the phosphoserine modification. Disordered regions lie at residues Ser416 to Gly443 and Ala562 to Glu581. Ser604 is modified (phosphoserine). The 137-residue stretch at Lys919–Gln1055 folds into the Calponin-homology (CH) 1 domain. Positions Val1056–Ser1077 form a coiled coil. Ser1102 is modified (phosphoserine). In terms of domain architecture, Calponin-homology (CH) 2 spans Ser1109–Leu1260. IQ domains follow at residues Gln1346–Gln1377, Tyr1392–Ser1421, Leu1581–Gln1612, Met1604–Ser1633, Thr1631–Lys1660, Ile1654–Lys1683, Met1727–Ser1756, Gln1750–Gln1781, Val1800–Lys1829, Gln1823–Lys1852, Thr1873–Lys1902, Glu1896–Gln1927, Leu1946–Gln1977, Gln1969–Gln2000, Thr2019–Thr2048, Cys2042–Gln2073, Leu2092–Lys2123, Met2115–Gln2146, Ile2165–Gln2196, Leu2238–Gln2269, Met2261–Gln2292, Val2310–Gln2341, Met2333–Gln2364, Gln2383–Gln2414, Met2406–Gln2437, Leu2456–Gln2487, Met2479–Gln2510, Gln2529–Gln2560, Gln2623–Ser2652, Arg2664–Gln2695, Met2687–Gln2718, Val2737–Ala2766, Gln2858–Gln2889, Ile2908–Lys2937, Ile2931–Ala2962, Lys2953–Gln2984, Arg3028–Gln3059, Phe3078–His3109, Arg3180–Lys3209, and Phe3203–Ser3234.

The protein localises to the cytoplasm. It localises to the cytoskeleton. It is found in the spindle. The protein resides in the nucleus. In terms of biological role, probable role in mitotic spindle regulation and coordination of mitotic processes. May have a preferential role in regulating neurogenesis. The polypeptide is Abnormal spindle-like microcephaly-associated protein homolog (ASPM) (Gorilla gorilla gorilla (Western lowland gorilla)).